The chain runs to 791 residues: Disintegrin and metalloproteinase domain-containing protein 1a (791 aa).

Residues 1–65 form the signal peptide; that stretch reads MSVAAAGRGF…LLIFLPSTFC (65 aa). A glycan (N-linked (GlcNAc...) asparagine) is linked at N72. Residues 201-220 are disordered; sequence CSVTPKDSPGDTSHPPRSRK. Residues 235-429 form the Peptidase M12B domain; the sequence is KYVEMFVVVN…HRGACLLDEP (195 aa). N256 is a glycosylation site (N-linked (GlcNAc...) asparagine). 3 disulfides stabilise this stretch: C345–C424, C385–C408, and C387–C393. H370 is a Zn(2+) binding site. E371 is a catalytic residue. 2 residues coordinate Zn(2+): H374 and H380. Residues N407 and N484 are each glycosylated (N-linked (GlcNAc...) asparagine). The Disintegrin domain maps to 438-522; that stretch reads AANCGNGVVE…ECPANSYMQD (85 aa). C494 and C514 are disulfide-bonded. N630 carries an N-linked (GlcNAc...) asparagine glycan. The EGF-like domain occupies 663–697; sequence LQYNCEPQEMCHGNGVCNNFKHCHCDAGFAPPDCS. 3 cysteine pairs are disulfide-bonded: C667-C679, C673-C685, and C687-C696. The chain crosses the membrane as a helical span at residues 741–761; it reads VMVLVVPIFLVVLLCCLMLIA. The Cytoplasmic portion of the chain corresponds to 762–791; the sequence is YLWSEVQEVVSPPSSSESSSSSSWSDSDSQ. The tract at residues 772-791 is disordered; the sequence is SPPSSSESSSSSSWSDSDSQ.

As to quaternary structure, heterodimer with ADAM2/fertilin subunit beta. Testis.

Its subcellular location is the membrane. In terms of biological role, may be involved in sperm-egg fusion. This chain is Disintegrin and metalloproteinase domain-containing protein 1a (Adam1a), found in Mus musculus (Mouse).